A 197-amino-acid chain; its full sequence is Putative double homeobox protein 3 (197 aa).

2 DNA-binding regions (homeobox) span residues 46 to 105 and 121 to 180; these read GRRM…LRQH and GRRK…WGQS. A disordered region spans residues 102 to 127; the sequence is LRQHRRQSRPWPGRRDPQKGRRKRTA.

It belongs to the paired homeobox family. In terms of tissue distribution, expressed in hepatoma Hep3B cells.

The protein resides in the nucleus. The chain is Putative double homeobox protein 3 (DUX3) from Homo sapiens (Human).